Here is a 42-residue protein sequence, read N- to C-terminus: Thymosin beta-10 (42 aa).

Basic and acidic residues-rich tracts occupy residues 1 to 25 and 33 to 42; these read MADKPDLGEINSFDKAKLKKTETQE and ETIEQEKQAK. The interval 1–42 is disordered; it reads MADKPDLGEINSFDKAKLKKTETQEKNTLPTKETIEQEKQAK. N-acetylalanine is present on alanine 2. At lysine 4 the chain carries N6-acetyllysine. A Phosphoserine modification is found at serine 12. An N6-acetyllysine modification is found at lysine 15. Threonine 21, threonine 23, and threonine 34 each carry phosphothreonine. Lysine 39 carries the N6-acetyllysine modification.

The protein belongs to the thymosin beta family. As to expression, distributed in numerous types of tissues, including thymus, spleen, lung, liver and muscle.

Its subcellular location is the cytoplasm. The protein localises to the cytoskeleton. Functionally, plays an important role in the organization of the cytoskeleton. Binds to and sequesters actin monomers (G actin) and therefore inhibits actin polymerization. The protein is Thymosin beta-10 (TMSB10) of Bos taurus (Bovine).